A 382-amino-acid polypeptide reads, in one-letter code: Gap junction alpha-1 protein (382 aa).

Residues 2–23 (GDWSALGKLLDKVQAYSTAGGK) are Cytoplasmic-facing. Ser-5 carries the phosphoserine modification. The helical transmembrane segment at 24–44 (VWLSVLFIFRILLLGTAVESA) threads the bilayer. Residues 45–76 (WGDEQSAFRCNTQQPGCENVCYDKSFPISHVR) lie on the Extracellular side of the membrane. 2 cysteine pairs are disulfide-bonded: Cys-54-Cys-192 and Cys-187-Cys-198. A helical membrane pass occupies residues 77 to 97 (FWVLQIIFVSVPTLLYLAHVF). At 98 to 155 (YVMRKEEKLNKKEEELKVAQTDGANVDMHLKQIEIKKFKYGIEEHGKVKMRGGLLRTY) the chain is on the cytoplasmic side. Lys-144 participates in a covalent cross-link: Glycyl lysine isopeptide (Lys-Gly) (interchain with G-Cter in SUMO). The chain crosses the membrane as a helical span at residues 156–176 (IISILFKSVFEVAFLLIQWYI). Over 177 to 207 (YGFSLSAVYTCKRDPCPHQVDCFLSRPTEKT) the chain is Extracellular. The chain crosses the membrane as a helical span at residues 208–228 (IFIIFMLVVSLVSLALNIIEL). Residues 229–382 (FYVFFKGIKD…SRPRPDDLEI (154 aa)) lie on the Cytoplasmic side of the membrane. A Glycyl lysine isopeptide (Lys-Gly) (interchain with G-Cter in SUMO) cross-link involves residue Lys-237. The tract at residues 244-382 (SDLYHATTGP…SRPRPDDLEI (139 aa)) is interaction with NOV. A Phosphotyrosine modification is found at Tyr-247. A phosphoserine mark is found at Ser-255, Ser-257, and Ser-262. The interval 264-382 (TYAYFNGCSS…SRPRPDDLEI (119 aa)) is interaction with UBQLN4. An S-nitrosocysteine modification is found at Cys-271. The residue at position 275 (Thr-275) is a Phosphothreonine. Phosphoserine occurs at positions 306 and 314. Over residues 317–332 (QNRMGQAGSTISNSHA) the composition is skewed to polar residues. The disordered stretch occupies residues 317 to 382 (QNRMGQAGST…SRPRPDDLEI (66 aa)). A Phosphoserine; by CK1 modification is found at Ser-325. Thr-326 carries the phosphothreonine modification. Phosphoserine; by CK1 occurs at positions 328 and 330. Residues Ser-344 and Ser-365 each carry the phosphoserine modification. The span at 362-374 (RPSSRASSRASSR) shows a compositional bias: low complexity. At Ser-368 the chain carries Phosphoserine; by PKC/PRKCG and PKC/PRKCD. A phosphoserine mark is found at Ser-369 and Ser-373.

Belongs to the connexin family. Alpha-type (group II) subfamily. A connexon is composed of a hexamer of connexins. Interacts with SGSM3. Interacts with RIC1/CIP150. Interacts with CNST and CSNK1D. Interacts (via C-terminus) with TJP1. Interacts (via C-terminus) with SRC (via SH3 domain). Interacts (not ubiquitinated) with UBQLN4 (via UBA domain). Interacts with NOV. Interacts with TMEM65. Interacts with ANK3/ANKG and PKP2. Post-translationally, phosphorylation at Ser-325, Ser-328 and Ser-330 by CK1 modulates gap junction assembly. Phosphorylated at Ser-368 by PRKCG; phosphorylation induces disassembly of gap junction plaques and inhibition of gap junction activity. Phosphorylation at Ser-368 by PRKCD triggers its internalization into small vesicles leading to proteasome-mediated degradation. Sumoylated with SUMO1, SUMO2 and SUMO3, which may regulate the level of functional Cx43 gap junctions at the plasma membrane. May be desumoylated by SENP1 or SENP2. In terms of processing, S-nitrosylation at Cys-271 is enriched at the muscle endothelial gap junction in arteries, it augments channel permeability and may regulate of smooth muscle cell to endothelial cell communication. Post-translationally, acetylated in the developing cortex; leading to delocalization from the cell membrane.

Its subcellular location is the cell membrane. It is found in the cell junction. The protein localises to the gap junction. The protein resides in the endoplasmic reticulum. Functionally, gap junction protein that acts as a regulator of bladder capacity. A gap junction consists of a cluster of closely packed pairs of transmembrane channels, the connexons, through which materials of low MW diffuse from one cell to a neighboring cell. May play a critical role in the physiology of hearing by participating in the recycling of potassium to the cochlear endolymph. Negative regulator of bladder functional capacity: acts by enhancing intercellular electrical and chemical transmission, thus sensitizing bladder muscles to cholinergic neural stimuli and causing them to contract. May play a role in cell growth inhibition through the regulation of NOV expression and localization. Plays an essential role in gap junction communication in the ventricles. The chain is Gap junction alpha-1 protein (GJA1) from Erinaceus europaeus (Western European hedgehog).